The chain runs to 451 residues: Phenylalanine-4-hydroxylase (451 aa).

The residue at position 16 (Ser16) is a Phosphoserine; by PKA. An ACT domain is found at 35–113 (SLIFSLKEEV…TVHELSRDKK (79 aa)). Fe cation is bound by residues His284, His289, and Glu329.

It belongs to the biopterin-dependent aromatic amino acid hydroxylase family. Homodimer and homotetramer. Fe(2+) is required as a cofactor. In terms of processing, phosphorylation at Ser-16 increases basal activity and facilitates activation by the substrate phenylalanine.

The enzyme catalyses (6R)-L-erythro-5,6,7,8-tetrahydrobiopterin + L-phenylalanine + O2 = (4aS,6R)-4a-hydroxy-L-erythro-5,6,7,8-tetrahydrobiopterin + L-tyrosine. It functions in the pathway amino-acid degradation; L-phenylalanine degradation; acetoacetate and fumarate from L-phenylalanine: step 1/6. N-terminal region of PAH is thought to contain allosteric binding sites for phenylalanine and to constitute an 'inhibitory' domain that regulates the activity of a catalytic domain in the C-terminal portion of the molecule. In terms of biological role, catalyzes the hydroxylation of L-phenylalanine to L-tyrosine. This chain is Phenylalanine-4-hydroxylase (PAH), found in Bos taurus (Bovine).